Reading from the N-terminus, the 382-residue chain is Quinolinate synthase (382 aa).

Residues H63 and S84 each contribute to the iminosuccinate site. C129 serves as a coordination point for [4Fe-4S] cluster. Iminosuccinate-binding positions include 155-157 and S172; that span reads YAN. C216 is a [4Fe-4S] cluster binding site. Residues 242–244 and T259 each bind iminosuccinate; that span reads HPE. [4Fe-4S] cluster is bound at residue C313.

This sequence belongs to the quinolinate synthase family. Type 1 subfamily. It depends on [4Fe-4S] cluster as a cofactor.

It is found in the cytoplasm. It carries out the reaction iminosuccinate + dihydroxyacetone phosphate = quinolinate + phosphate + 2 H2O + H(+). It functions in the pathway cofactor biosynthesis; NAD(+) biosynthesis; quinolinate from iminoaspartate: step 1/1. Functionally, catalyzes the condensation of iminoaspartate with dihydroxyacetone phosphate to form quinolinate. This is Quinolinate synthase from Ralstonia pickettii (strain 12J).